The following is a 413-amino-acid chain: Probable short/branched chain specific acyl-CoA dehydrogenase (413 aa).

Residues 152–161 (FCLSESGSGS) and 186–188 (WIT) each bind FAD. Ser-161 contributes to the substrate binding site. Residues Tyr-208, Tyr-262, and 270-273 (NEGR) contribute to the substrate site. Residues Arg-298, Gln-309, and 366 to 370 (SMLGG) contribute to the FAD site. The active-site Proton acceptor is the Glu-393. 395–397 (TSN) contributes to the FAD binding site.

It belongs to the acyl-CoA dehydrogenase family. Homotetramer. Requires FAD as cofactor.

It catalyses the reaction 2-methylbutanoyl-CoA + oxidized [electron-transfer flavoprotein] + H(+) = (2E)-2-methylbut-2-enoyl-CoA + reduced [electron-transfer flavoprotein]. It participates in lipid metabolism; mitochondrial fatty acid beta-oxidation. The protein operates within amino-acid degradation; L-isoleucine degradation. In terms of biological role, probable short and branched chain specific acyl-CoA dehydrogenase that catalyzes the removal of one hydrogen from C-2 and C-3 of the fatty acyl-CoA thioester, resulting in the formation of trans-2-enoyl-CoA. The polypeptide is Probable short/branched chain specific acyl-CoA dehydrogenase (acadsb) (Dictyostelium discoideum (Social amoeba)).